The following is a 108-amino-acid chain: UPF0060 membrane protein Rsph17029_0436 (108 aa).

4 helical membrane-spanning segments follow: residues 5–25, 32–52, 62–82, and 86–106; these read LAAYAGAALAEIAGCFAVWAW, ALWLVPGALSLGAFAWLLALT, AVYGGVYVAASLLWLWAVEGV, and RWDMGGAALVLAGAAVILWAP.

The protein belongs to the UPF0060 family.

Its subcellular location is the cell inner membrane. In Cereibacter sphaeroides (strain ATCC 17029 / ATH 2.4.9) (Rhodobacter sphaeroides), this protein is UPF0060 membrane protein Rsph17029_0436.